A 129-amino-acid chain; its full sequence is Ribosome-binding factor A (129 aa).

Belongs to the RbfA family. Monomer. Binds 30S ribosomal subunits, but not 50S ribosomal subunits or 70S ribosomes.

The protein resides in the cytoplasm. In terms of biological role, one of several proteins that assist in the late maturation steps of the functional core of the 30S ribosomal subunit. Associates with free 30S ribosomal subunits (but not with 30S subunits that are part of 70S ribosomes or polysomes). Required for efficient processing of 16S rRNA. May interact with the 5'-terminal helix region of 16S rRNA. This is Ribosome-binding factor A from Desulfosudis oleivorans (strain DSM 6200 / JCM 39069 / Hxd3) (Desulfococcus oleovorans).